We begin with the raw amino-acid sequence, 326 residues long: Transmembrane protein PVRIG (326 aa).

Transmembrane regions (helical) follow at residues 26–46, 62–78, and 172–192; these read LVLPWVLLTLCVTAGTPEVWV, CGFLGSGSISLVTVSWG, and LAGILGVSGVLLFGCVYLLHL. At Y233 the chain carries Phosphotyrosine. The interval 296–326 is disordered; that stretch reads AGERPPHTGPGLTLFPDPRGPRAMEGPLGVR.

In terms of assembly, interacts with NECTIN2, hence competing with CD226. In terms of tissue distribution, expressed in some types of immune cells. Expressed at low levels on the surface of freshly isolated T-cells and natural killer (NK) cells, predominantly on CD8+ T-cells (mainly memory/effector, but not naive cells) and on both CD16+ and CD16- NK cells. T-cell expression levels are variable among individuals. Not detected in B-cells, naive or helper T-cells, monocytes, nor neutrophils (at protein level). Not detected in dendritic cells.

The protein resides in the cell membrane. Functionally, cell surface receptor for NECTIN2. May act as a coinhibitory receptor that suppresses T-cell receptor-mediated signals. Following interaction with NECTIN2, inhibits T-cell proliferation. Competes with CD226 for NECTIN2-binding. In Homo sapiens (Human), this protein is Transmembrane protein PVRIG (PVRIG).